The sequence spans 461 residues: Photosystem II CP43 reaction center protein (461 aa).

Positions 1-2 (ME) are excised as a propeptide. Position 3 is an N-acetylthreonine (threonine 3). Threonine 3 carries the phosphothreonine modification. 5 helical membrane passes run 57–81 (LFEV…PHIA), 122–143 (LIGP…KDKN), 166–188 (KAMY…RIIS), 243–263 (KPWG…LSYS), and 279–300 (WFNN…ASQA). Glutamate 355 serves as a coordination point for [CaMn4O5] cluster. Residues 435–459 (RARAAAAGFEKGIDRDTEPVLSMKP) traverse the membrane as a helical segment.

Belongs to the PsbB/PsbC family. PsbC subfamily. As to quaternary structure, PSII is composed of 1 copy each of membrane proteins PsbA, PsbB, PsbC, PsbD, PsbE, PsbF, PsbH, PsbI, PsbJ, PsbK, PsbL, PsbM, PsbT, PsbX, PsbY, PsbZ, Psb30/Ycf12, at least 3 peripheral proteins of the oxygen-evolving complex and a large number of cofactors. It forms dimeric complexes. Binds multiple chlorophylls and provides some of the ligands for the Ca-4Mn-5O cluster of the oxygen-evolving complex. It may also provide a ligand for a Cl- that is required for oxygen evolution. PSII binds additional chlorophylls, carotenoids and specific lipids. is required as a cofactor.

It localises to the plastid. The protein localises to the chloroplast thylakoid membrane. In terms of biological role, one of the components of the core complex of photosystem II (PSII). It binds chlorophyll and helps catalyze the primary light-induced photochemical processes of PSII. PSII is a light-driven water:plastoquinone oxidoreductase, using light energy to abstract electrons from H(2)O, generating O(2) and a proton gradient subsequently used for ATP formation. The chain is Photosystem II CP43 reaction center protein from Oltmannsiellopsis viridis (Marine flagellate).